Reading from the N-terminus, the 306-residue chain is Pyridoxal 5'-phosphate synthase subunit PdxS (306 aa).

D36 contacts D-ribose 5-phosphate. The active-site Schiff-base intermediate with D-ribose 5-phosphate is the K93. G165 serves as a coordination point for D-ribose 5-phosphate. R177 is a D-glyceraldehyde 3-phosphate binding site. D-ribose 5-phosphate-binding positions include G226 and G247–S248.

Belongs to the PdxS/SNZ family. As to quaternary structure, in the presence of PdxT, forms a dodecamer of heterodimers.

The catalysed reaction is aldehydo-D-ribose 5-phosphate + D-glyceraldehyde 3-phosphate + L-glutamine = pyridoxal 5'-phosphate + L-glutamate + phosphate + 3 H2O + H(+). Its pathway is cofactor biosynthesis; pyridoxal 5'-phosphate biosynthesis. Functionally, catalyzes the formation of pyridoxal 5'-phosphate from ribose 5-phosphate (RBP), glyceraldehyde 3-phosphate (G3P) and ammonia. The ammonia is provided by the PdxT subunit. Can also use ribulose 5-phosphate and dihydroxyacetone phosphate as substrates, resulting from enzyme-catalyzed isomerization of RBP and G3P, respectively. This is Pyridoxal 5'-phosphate synthase subunit PdxS from Nocardia farcinica (strain IFM 10152).